The following is a 2439-amino-acid chain: Mucin-6 (2439 aa).

An N-terminal signal peptide occupies residues 1–22 (MVQRWLLLSCCGALLSAGLANT). Residues 43–214 (GQCSTWGAGH…KLDDPGEICT (172 aa)) form the VWFD 1 domain. 2 cysteine pairs are disulfide-bonded: Cys-45/Cys-176 and Cys-67/Cys-213. Residue Asn-268 is glycosylated (N-linked (GlcNAc...) asparagine). The TIL domain occupies 302–357 (CPANQVYQECGSACVKTCSNPQHSCSSSCTFGCFCPEGTVLNDLSNNHTCVPVTQC). The VWFD 2 domain maps to 395–579 (GHCSLEGGSF…ALERETDPCS (185 aa)). 2 disulfide bridges follow: Cys-397–Cys-533 and Cys-419–Cys-578. Residues Asn-486 and Asn-659 are each glycosylated (N-linked (GlcNAc...) asparagine). The VWFD 3 domain maps to 866–1038 (STCTLYGEGH…NSWKESPLCG (173 aa)). Disulfide bonds link Cys-868–Cys-1002, Cys-890–Cys-1037, Cys-899–Cys-999, and Cys-917–Cys-924. Residues Asn-975 and Asn-1179 are each glycosylated (N-linked (GlcNAc...) asparagine). 8 disordered regions span residues 1202–1455 (PQPP…TSLV), 1471–1626 (ATSA…LVTP), 1642–1834 (SASI…HPHT), 1868–1983 (SIHS…STGP), 2033–2077 (ATSA…THSS), 2090–2196 (SSSW…SASP), 2233–2278 (VSPT…SLTT), and 2323–2348 (LTAH…SPGV). Low complexity predominate over residues 1224–1265 (TGTSTTIGLLSSTGPSPSSNHTPASPTQTPLLPATLTSSKPT). A compositionally biased stretch (polar residues) spans 1276-1286 (TAVTPQATSGL). Low complexity predominate over residues 1294–1339 (STATKPTVTQATTRATASTASPATTSTAQSTTRTTMTLPTPATSGT). Residues 1340–1351 (SPTLPKSTNQEL) are compositionally biased toward polar residues. 2 stretches are compositionally biased toward low complexity: residues 1352–1373 (PGTT…TGPT) and 1381–1415 (TRPT…AGSP). 3 stretches are compositionally biased toward polar residues: residues 1416–1455 (VPST…TSLV), 1471–1481 (ATSASNHSAPT), and 1490–1520 (LKAT…STNK). Low complexity-rich tracts occupy residues 1521-1567 (TPTS…ATSS) and 1574-1611 (TTHS…PQTT). A 1; truncated repeat occupies 1561–1738 (TNSATSSRPP…TTSGTSQSRS (178 aa)). Positions 1607 to 1953 (HPQTTLPTHV…STGTRTPVAH (347 aa)) are approximate repeats. The segment covering 1659-1686 (LKATGSTHTAPTMTLTTSGTSQALSSLN) has biased composition (polar residues). Low complexity predominate over residues 1687–1768 (TAKTSTSLHS…PEVTSTSTTS (82 aa)). Residues 1769 to 1793 (ITPNHTSTGTRTPVAHTTSATSSRL) are compositionally biased toward polar residues. Copy 2 of the repeat occupies 1785–1953 (TTSATSSRLP…STGTRTPVAH (169 aa)). Composition is skewed to low complexity over residues 1794 to 1834 (PTPF…HPHT) and 1891 to 1917 (TAPP…TSTS). Residues 1918–1962 (LPYHTSSTHHPEVTPTSTTNITPKHTSTGTRTPVAHTTSASSSRL) show a composition bias toward polar residues. Residues 1963-1983 (PTPFTTHSPPTGSSPFSSTGP) show a composition bias toward low complexity. The span at 2052–2070 (LKATGSTHTAPPMTVTTSG) shows a compositional bias: polar residues. Over residues 2090 to 2102 (SSSWLPQNSSSRP) the composition is skewed to low complexity. A compositionally biased stretch (polar residues) spans 2107–2120 (ITTQLPHLSSATTP). The span at 2121 to 2196 (VSTTNQLSSS…PTTASVSASP (76 aa)) shows a compositional bias: low complexity. Positions 2240–2264 (HLASSTIAFPSTPRTTASTHTAPAF) are enriched in polar residues. A compositionally biased stretch (low complexity) spans 2265-2278 (SSQSTTSRSTSLTT). The segment covering 2323–2347 (LTAHGSTPASAPVSSLGTPTPTSPG) has biased composition (polar residues). 4 cysteine pairs are disulfide-bonded: Cys-2349/Cys-2396, Cys-2363/Cys-2410, Cys-2372/Cys-2430, and Cys-2376/Cys-2432. Residues 2349-2438 (CSVREQQEEI…HCVCSSVACG (90 aa)) enclose the CTCK domain.

As to quaternary structure, multimer; disulfide-linked. In terms of processing, O-glycosylated. Expressed in the regenerative zone of gastric antrum, gastric body mucosa and gastric incisura mucosa. Expressed in the deeper mucous glands of gastric antrum. Overexpressed in Helicobacter pylori infected gastric epithelium. Highly expressed in duodenal Brunner's glands, gall bladder, seminal vesicle, pancreatic centroacinar cells and ducts, and periductal glands of the common bile duct.

It is found in the secreted. May provide a mechanism for modulation of the composition of the protective mucus layer related to acid secretion or the presence of bacteria and noxious agents in the lumen. Plays an important role in the cytoprotection of epithelial surfaces and are used as tumor markers in a variety of cancers. May play a role in epithelial organogenesis. In Homo sapiens (Human), this protein is Mucin-6 (MUC6).